Consider the following 286-residue polypeptide: Acetylglutamate kinase (286 aa).

Substrate-binding positions include G70 to G71, R92, and N184.

This sequence belongs to the acetylglutamate kinase family. ArgB subfamily.

The protein localises to the cytoplasm. The enzyme catalyses N-acetyl-L-glutamate + ATP = N-acetyl-L-glutamyl 5-phosphate + ADP. It participates in amino-acid biosynthesis; L-arginine biosynthesis; N(2)-acetyl-L-ornithine from L-glutamate: step 2/4. Its function is as follows. Catalyzes the ATP-dependent phosphorylation of N-acetyl-L-glutamate. This Ruegeria sp. (strain TM1040) (Silicibacter sp.) protein is Acetylglutamate kinase.